The following is a 201-amino-acid chain: Large ribosomal subunit protein eL15 (201 aa).

Belongs to the eukaryotic ribosomal protein eL15 family.

This Quercus suber (Cork oak) protein is Large ribosomal subunit protein eL15 (RPL15).